A 455-amino-acid polypeptide reads, in one-letter code: tRNA-2-methylthio-N(6)-dimethylallyladenosine synthase (455 aa).

The 119-residue stretch at 18–136 (KLFFIQTYGC…FPEYLNRVKT (119 aa)) folds into the MTTase N-terminal domain. Residues Cys27, Cys63, Cys97, Cys173, Cys177, and Cys180 each contribute to the [4Fe-4S] cluster site. The 231-residue stretch at 159–389 (RKSDIKGFVT…VEIVNTGIAK (231 aa)) folds into the Radical SAM core domain. One can recognise a TRAM domain in the interval 392–455 (KDAEGKIYEV…SFSLIGEVEK (64 aa)).

This sequence belongs to the methylthiotransferase family. MiaB subfamily. In terms of assembly, monomer. Requires [4Fe-4S] cluster as cofactor.

Its subcellular location is the cytoplasm. It carries out the reaction N(6)-dimethylallyladenosine(37) in tRNA + (sulfur carrier)-SH + AH2 + 2 S-adenosyl-L-methionine = 2-methylsulfanyl-N(6)-dimethylallyladenosine(37) in tRNA + (sulfur carrier)-H + 5'-deoxyadenosine + L-methionine + A + S-adenosyl-L-homocysteine + 2 H(+). Functionally, catalyzes the methylthiolation of N6-(dimethylallyl)adenosine (i(6)A), leading to the formation of 2-methylthio-N6-(dimethylallyl)adenosine (ms(2)i(6)A) at position 37 in tRNAs that read codons beginning with uridine. The protein is tRNA-2-methylthio-N(6)-dimethylallyladenosine synthase of Clostridium beijerinckii (strain ATCC 51743 / NCIMB 8052) (Clostridium acetobutylicum).